The primary structure comprises 789 residues: Alpha-glucosidase 2 (789 aa).

2 disordered regions span residues 1–24 and 512–531; these read MTGLSPSGDIKPLLDDESQRPRVI and ELNPQSLSSGLDDYPRASHP. Aspartate 523 serves as the catalytic Proton donor. Glutamate 756 acts as the Proton acceptor in catalysis.

It belongs to the glycosyl hydrolase 63 family.

It participates in glycan metabolism; N-glycan degradation. This Arabidopsis thaliana (Mouse-ear cress) protein is Alpha-glucosidase 2 (GCS2).